Consider the following 154-residue polypeptide: Superoxide dismutase [Cu-Zn] (154 aa).

Cu cation contacts are provided by His-45, His-47, and His-62. A disulfide bond links Cys-56 and Cys-146. Positions 62, 70, 79, and 82 each coordinate Zn(2+). His-120 is a binding site for Cu cation.

This sequence belongs to the Cu-Zn superoxide dismutase family. Homodimer. It depends on Cu cation as a cofactor. Zn(2+) is required as a cofactor.

The protein resides in the cytoplasm. The catalysed reaction is 2 superoxide + 2 H(+) = H2O2 + O2. Destroys radicals which are normally produced within the cells and which are toxic to biological systems. The protein is Superoxide dismutase [Cu-Zn] of Bombyx mori (Silk moth).